The following is a 238-amino-acid chain: Large ribosomal subunit protein uL2 (238 aa).

The interval asparagine 198–arginine 238 is disordered. Residues histidine 206 to arginine 217 are compositionally biased toward polar residues.

It belongs to the universal ribosomal protein uL2 family. In terms of assembly, part of the 50S ribosomal subunit. Forms a bridge to the 30S subunit in the 70S ribosome.

In terms of biological role, one of the primary rRNA binding proteins. Required for association of the 30S and 50S subunits to form the 70S ribosome, for tRNA binding and peptide bond formation. It has been suggested to have peptidyltransferase activity; this is somewhat controversial. Makes several contacts with the 16S rRNA in the 70S ribosome. This chain is Large ribosomal subunit protein uL2, found in Hyperthermus butylicus (strain DSM 5456 / JCM 9403 / PLM1-5).